The primary structure comprises 380 residues: 4-hydroxy-3-methylbut-2-en-1-yl diphosphate synthase (flavodoxin) (380 aa).

[4Fe-4S] cluster contacts are provided by Cys280, Cys283, Cys315, and Glu322.

The protein belongs to the IspG family. [4Fe-4S] cluster is required as a cofactor.

The catalysed reaction is (2E)-4-hydroxy-3-methylbut-2-enyl diphosphate + oxidized [flavodoxin] + H2O + 2 H(+) = 2-C-methyl-D-erythritol 2,4-cyclic diphosphate + reduced [flavodoxin]. Its pathway is isoprenoid biosynthesis; isopentenyl diphosphate biosynthesis via DXP pathway; isopentenyl diphosphate from 1-deoxy-D-xylulose 5-phosphate: step 5/6. Its function is as follows. Converts 2C-methyl-D-erythritol 2,4-cyclodiphosphate (ME-2,4cPP) into 1-hydroxy-2-methyl-2-(E)-butenyl 4-diphosphate. In Cutibacterium acnes (strain DSM 16379 / KPA171202) (Propionibacterium acnes), this protein is 4-hydroxy-3-methylbut-2-en-1-yl diphosphate synthase (flavodoxin).